The chain runs to 315 residues: DNA-directed RNA polymerase subunit alpha (315 aa).

The tract at residues Met-1–Thr-228 is alpha N-terminal domain (alpha-NTD). The interval Lys-245–Asp-315 is alpha C-terminal domain (alpha-CTD).

Belongs to the RNA polymerase alpha chain family. In terms of assembly, homodimer. The RNAP catalytic core consists of 2 alpha, 1 beta, 1 beta' and 1 omega subunit. When a sigma factor is associated with the core the holoenzyme is formed, which can initiate transcription.

The enzyme catalyses RNA(n) + a ribonucleoside 5'-triphosphate = RNA(n+1) + diphosphate. In terms of biological role, DNA-dependent RNA polymerase catalyzes the transcription of DNA into RNA using the four ribonucleoside triphosphates as substrates. The chain is DNA-directed RNA polymerase subunit alpha from Desulfitobacterium hafniense (strain DSM 10664 / DCB-2).